Reading from the N-terminus, the 101-residue chain is Small ribosomal subunit protein uS10 (101 aa).

The protein belongs to the universal ribosomal protein uS10 family. Part of the 30S ribosomal subunit.

In terms of biological role, involved in the binding of tRNA to the ribosomes. This Flavobacterium johnsoniae (strain ATCC 17061 / DSM 2064 / JCM 8514 / BCRC 14874 / CCUG 350202 / NBRC 14942 / NCIMB 11054 / UW101) (Cytophaga johnsonae) protein is Small ribosomal subunit protein uS10.